Reading from the N-terminus, the 325-residue chain is Methionyl-tRNA formyltransferase (325 aa).

Residue 113-116 (SLLP) participates in (6S)-5,6,7,8-tetrahydrofolate binding.

The protein belongs to the Fmt family.

The enzyme catalyses L-methionyl-tRNA(fMet) + (6R)-10-formyltetrahydrofolate = N-formyl-L-methionyl-tRNA(fMet) + (6S)-5,6,7,8-tetrahydrofolate + H(+). In terms of biological role, attaches a formyl group to the free amino group of methionyl-tRNA(fMet). The formyl group appears to play a dual role in the initiator identity of N-formylmethionyl-tRNA by promoting its recognition by IF2 and preventing the misappropriation of this tRNA by the elongation apparatus. In Chromohalobacter salexigens (strain ATCC BAA-138 / DSM 3043 / CIP 106854 / NCIMB 13768 / 1H11), this protein is Methionyl-tRNA formyltransferase.